Reading from the N-terminus, the 275-residue chain is Type III pantothenate kinase (275 aa).

6 to 13 (DAGNTNIV) lines the ATP pocket. 108–111 (GADR) serves as a coordination point for substrate. Asp-110 serves as the catalytic Proton acceptor. Asp-130 is a K(+) binding site. Thr-133 is a binding site for ATP. Thr-187 provides a ligand contact to substrate.

This sequence belongs to the type III pantothenate kinase family. Homodimer. NH4(+) is required as a cofactor. It depends on K(+) as a cofactor.

It localises to the cytoplasm. It carries out the reaction (R)-pantothenate + ATP = (R)-4'-phosphopantothenate + ADP + H(+). It functions in the pathway cofactor biosynthesis; coenzyme A biosynthesis; CoA from (R)-pantothenate: step 1/5. Functionally, catalyzes the phosphorylation of pantothenate (Pan), the first step in CoA biosynthesis. This chain is Type III pantothenate kinase, found in Zymomonas mobilis subsp. mobilis (strain ATCC 31821 / ZM4 / CP4).